The following is an 853-amino-acid chain: Neural cell adhesion molecule 1 (853 aa).

The N-terminal stretch at 1-19 is a signal peptide; sequence MLQTKNLIWTLFFLGTAVS. Ig-like C2-type domains lie at 20 to 111, 116 to 205, 212 to 300, 307 to 412, and 415 to 500; these read LQVD…ATVN, QKLM…KDIQ, PTVQ…ASIH, PKIT…LEVQ, and PKLQ…ESLE. The Extracellular portion of the chain corresponds to 20 to 719; the sequence is LQVDIVPSQG…NGSPTSGLST (700 aa). 2 cysteine pairs are disulfide-bonded: cysteine 41–cysteine 96 and cysteine 139–cysteine 189. Residues 152-156 and 161-165 contribute to the heparin site; these read KHKGR and KKDVR. Residue asparagine 222 is glycosylated (N-linked (GlcNAc...) asparagine). An intrachain disulfide couples cysteine 235 to cysteine 286. Asparagine 314, asparagine 346, asparagine 432, asparagine 458, and asparagine 487 each carry an N-linked (GlcNAc...) asparagine glycan. Cysteine 328 and cysteine 394 form a disulfide bridge. The cysteines at positions 435 and 488 are disulfide-linked. 2 Fibronectin type-III domains span residues 508 to 607 and 609 to 704; these read TPSS…TQPV and EPSA…SAQP. The chain crosses the membrane as a helical span at residues 720–737; that stretch reads GAIVGILVVTFVLLLVAV. At 738 to 853 the chain is on the cytoplasmic side; the sequence is DVTCYFLNKC…TQIKVNESKA (116 aa). The segment at 764–853 is disordered; it reads GAKGKDMEEG…TQIKVNESKA (90 aa). Basic and acidic residues-rich tracts occupy residues 766–807 and 815–829; these read KGKD…HTEP and EPEK…ETET. Residues serine 778 and serine 782 each carry the phosphoserine modification. A compositionally biased stretch (polar residues) spans 838-853; that stretch reads TVPNDATQIKVNESKA.

In terms of assembly, interacts with MDK. Found in a complex with SLC39A6, SLC39A10 and with NCAM1; this complex controls NCAM1 phosphorylation and integration into focal adhesion complexes during epithelial-tomesenchymal transition. Interacts with synaptic plasticity regulator PANTS. Post-translationally, polysialylated by ST8SIA2 and ST8SIA4. Polysialylation modulates cell interactions by confering both attractive and repulsive properties that are highly regulated by ST8SIA2 and ST8SIA4. Polysialylation is formed on a-2,3-linked sialic acid of core glycans.

It is found in the cell membrane. Its function is as follows. This protein is a cell adhesion molecule involved in neuron-neuron adhesion, neurite fasciculation, outgrowth of neurites, etc. This chain is Neural cell adhesion molecule 1, found in Bos taurus (Bovine).